Reading from the N-terminus, the 625-residue chain is Voltage-gated potassium channel KCNC4 (625 aa).

2 disordered regions span residues 1–24 and 65–86; these read MISS…SKTC and LADP…SSGS. The segment at 1–28 is inactivation gate; sequence MISSVCVSSYRGRKSGNKPPSKTCLKEE. The Cytoplasmic portion of the chain corresponds to 1 to 227; sequence MISSVCVSSY…EDPYSSRAAR (227 aa). A phosphoserine mark is found at serine 8, serine 9, serine 15, and serine 21. The segment covering 77–86 has biased composition (gly residues); the sequence is DGGGAGSSGS. Positions 117, 123, 144, and 145 each coordinate Zn(2+). A helical transmembrane segment spans residues 228-248; it reads VVAFASLFFILVSITTFCLET. Asparagine 257 and asparagine 266 each carry an N-linked (GlcNAc...) asparagine glycan. A helical membrane pass occupies residues 279–299; that stretch reads EPILTYIEGVCVMWFTLEFLV. The Cytoplasmic portion of the chain corresponds to 300–313; it reads RIVCCPDTLDFVKN. Residues 314 to 334 traverse the membrane as a helical segment; that stretch reads LLNIIDFVAILPFYLEVGLSG. Residues 346–365 form a helical; Voltage-sensor membrane-spanning segment; sequence FLRVVRFVRILRIFKLTRHF. Residues 366–381 lie on the Cytoplasmic side of the membrane; it reads VGLRVLGHTLRASTNE. The chain crosses the membrane as a helical span at residues 382 to 402; that stretch reads FLLLIIFLALGVLIFATMIYY. 4 residues coordinate K(+): threonine 437, leucine 438, glycine 439, and tyrosine 440. The short motif at 437 to 442 is the Selectivity filter element; sequence TLGYGD. Residues 453-473 traverse the membrane as a helical segment; it reads VGALCALAGVLTIAMPVPVIV. Topologically, residues 474 to 625 are cytoplasmic; that stretch reads NNFGMYYSLA…CVPVSHTCAL (152 aa). Residues 490–581 are disordered; the sequence is PKKRKKHVPR…RRALRRSGTR (92 aa). Over residues 528-543 the composition is skewed to basic and acidic residues; it reads AREEGMVERKRADSKQ.

Belongs to the potassium channel family. C (Shaw) (TC 1.A.1.2) subfamily. Kv3.4/KCNC4 sub-subfamily. Homotetramer. Heterotetramer of potassium channel proteins. Post-translationally, phosphorylation of serine residues in the inactivation gate inhibits rapid channel closure.

It localises to the membrane. The enzyme catalyses K(+)(in) = K(+)(out). In terms of biological role, voltage-gated potassium channel that opens in response to the voltage difference across the membrane, forming a potassium-selective channel through which potassium ions pass in accordance with their electrochemical gradient. The channel displays rapid activation and inactivation kinetics. The chain is Voltage-gated potassium channel KCNC4 from Rattus norvegicus (Rat).